We begin with the raw amino-acid sequence, 385 residues long: UPF0744 protein YSD83 (385 aa).

Belongs to the UPF0744 family.

The sequence is that of UPF0744 protein YSD83 (YSD83) from Saccharomyces paradoxus (Yeast).